The chain runs to 426 residues: Proline--tRNA ligase (426 aa).

It belongs to the class-II aminoacyl-tRNA synthetase family. ProS type 2 subfamily. As to quaternary structure, homodimer.

It is found in the cytoplasm. The enzyme catalyses tRNA(Pro) + L-proline + ATP = L-prolyl-tRNA(Pro) + AMP + diphosphate. Functionally, catalyzes the attachment of proline to tRNA(Pro) in a two-step reaction: proline is first activated by ATP to form Pro-AMP and then transferred to the acceptor end of tRNA(Pro). The protein is Proline--tRNA ligase of Anaplasma phagocytophilum (strain HZ).